A 325-amino-acid polypeptide reads, in one-letter code: Alkanal monooxygenase beta chain (325 aa).

It belongs to the bacterial luciferase oxidoreductase family. As to quaternary structure, heterodimer of an alpha and a beta chain.

The catalysed reaction is a long-chain fatty aldehyde + FMNH2 + O2 = a long-chain fatty acid + hnu + FMN + H2O + 2 H(+). Light-emitting reaction in luminous bacteria. The specific role of the beta subunit is unknown, but it is absolutely required for bioluminescence activity. This Photobacterium leiognathi protein is Alkanal monooxygenase beta chain (luxB).